Consider the following 803-residue polypeptide: Leucine--tRNA ligase (803 aa).

A 'HIGH' region motif is present at residues 40-51 (PYPSGAGLHVGH). The 'KMSKS' region motif lies at 575–579 (KMSKS). ATP is bound at residue K578.

It belongs to the class-I aminoacyl-tRNA synthetase family.

Its subcellular location is the cytoplasm. It catalyses the reaction tRNA(Leu) + L-leucine + ATP = L-leucyl-tRNA(Leu) + AMP + diphosphate. In Listeria monocytogenes serovar 1/2a (strain ATCC BAA-679 / EGD-e), this protein is Leucine--tRNA ligase.